Reading from the N-terminus, the 139-residue chain is Protein cornichon homolog 4 (139 aa).

3 helical membrane-spanning segments follow: residues 5–25, 57–77, and 118–138; these read VFLF…YFII, IVTV…NLPV, and LGFY…ALIN.

It belongs to the cornichon family. Interacts with Sec23/24 complex components SEC24B and SEC24D. Interacts with CCR5. Interacts with ADRB2 in the early secretory pathway.

The protein localises to the membrane. Its subcellular location is the endoplasmic reticulum. The protein resides in the endoplasmic reticulum-Golgi intermediate compartment. Functionally, involved in G protein-coupled receptors (GPCRs) trafficking from the endoplasmic reticulum to the cell surface; it promotes the exit of GPCRs from the early secretory pathway, likely through interaction with the COPII machinery. In Mus musculus (Mouse), this protein is Protein cornichon homolog 4 (Cnih4).